The following is a 166-amino-acid chain: Phosphopantetheine adenylyltransferase (166 aa).

Thr-10 contributes to the substrate binding site. ATP-binding positions include Thr-10–Phe-11 and His-18. Lys-42, Leu-74, and Arg-88 together coordinate substrate. Residues Gly-89–Arg-91, Glu-99, and Asn-124–Ser-130 contribute to the ATP site.

The protein belongs to the bacterial CoaD family. In terms of assembly, homohexamer. Requires Mg(2+) as cofactor.

The protein localises to the cytoplasm. It catalyses the reaction (R)-4'-phosphopantetheine + ATP + H(+) = 3'-dephospho-CoA + diphosphate. It functions in the pathway cofactor biosynthesis; coenzyme A biosynthesis; CoA from (R)-pantothenate: step 4/5. Its function is as follows. Reversibly transfers an adenylyl group from ATP to 4'-phosphopantetheine, yielding dephospho-CoA (dPCoA) and pyrophosphate. The chain is Phosphopantetheine adenylyltransferase from Idiomarina loihiensis (strain ATCC BAA-735 / DSM 15497 / L2-TR).